A 230-amino-acid chain; its full sequence is MSSTTLSPTTPSQLCSGKSGISCPSIALLVKPTRTQMTGRGNKGMKITCQATSIPADRVPDMSKRKTLNLLLLGALSLPTAGMLVPYGSFLVPPGSGSSTGGTVAKDAVGNDVVATEWLKTHAPGDRTLTQGLKGDPTYLVVEKDRTLATFAINAVCTHLGCVVPFNQAENKFICPCHGSQYNDQGRVVRGPAPLSLALAHCDVGVEDGKVVFVPWVETDFRTGDAPWWS.

Residues 1–50 constitute a chloroplast transit peptide; the sequence is MSSTTLSPTTPSQLCSGKSGISCPSIALLVKPTRTQMTGRGNKGMKITCQ. The chain crosses the membrane as a helical span at residues 72–92; that stretch reads LLGALSLPTAGMLVPYGSFLV. The Rieske domain maps to 115 to 213; that stretch reads ATEWLKTHAP…VGVEDGKVVF (99 aa). 4 residues coordinate [2Fe-2S] cluster: Cys157, His159, Cys175, and His178. The cysteines at positions 162 and 177 are disulfide-linked.

It belongs to the Rieske iron-sulfur protein family. In terms of assembly, the 4 large subunits of the cytochrome b6-f complex are cytochrome b6, subunit IV (17 kDa polypeptide, petD), cytochrome f and the Rieske protein, while the 4 small subunits are petG, petL, petM and petN. The complex functions as a dimer. [2Fe-2S] cluster is required as a cofactor.

The protein localises to the plastid. The protein resides in the chloroplast thylakoid membrane. It carries out the reaction 2 oxidized [plastocyanin] + a plastoquinol + 2 H(+)(in) = 2 reduced [plastocyanin] + a plastoquinone + 4 H(+)(out). Component of the cytochrome b6-f complex, which mediates electron transfer between photosystem II (PSII) and photosystem I (PSI), cyclic electron flow around PSI, and state transitions. The sequence is that of Cytochrome b6-f complex iron-sulfur subunit, chloroplastic (petC) from Pisum sativum (Garden pea).